The following is a 504-amino-acid chain: Apoptosis inhibitor 5 (504 aa).

Positions 1–360 (MPTVEELYRN…HQLGRKLPDF (360 aa)) are ARM-like and Heat-like helical repeats. Lysine 251 is subject to N6-acetyllysine. The segment at 370-391 (LKDFKIRLQYFARGLQVYIRQL) is leucine-zipper. The residue at position 399 (threonine 399) is a Phosphothreonine. The disordered stretch occupies residues 452 to 504 (GQKRASEDTTSGSPPKKSSAGPKRDARQIYNPPSGKYSSNLGNFNYERSLQGK). The short motif at 454–475 (KRASEDTTSGSPPKKSSAGPKR) is the Nuclear localization signal element. 3 positions are modified to phosphoserine: serine 462, serine 464, and serine 469. Low complexity predominate over residues 462–472 (SGSPPKKSSAG). A compositionally biased stretch (polar residues) spans 487–504 (KYSSNLGNFNYERSLQGK).

Belongs to the API5 family. As to quaternary structure, monomer. Interacts with FGF2 and ACIN1. Acetylation at Lys-251 impairs antiapoptotic function.

The protein localises to the nucleus. It is found in the cytoplasm. Antiapoptotic factor that may have a role in protein assembly. Negatively regulates ACIN1. By binding to ACIN1, it suppresses ACIN1 cleavage from CASP3 and ACIN1-mediated DNA fragmentation. Also known to efficiently suppress E2F1-induced apoptosis. This chain is Apoptosis inhibitor 5 (API5), found in Pongo abelii (Sumatran orangutan).